The primary structure comprises 458 residues: Bifunctional protein GlmU (458 aa).

The segment at 1-230 is pyrophosphorylase; that stretch reads MHKRTAVVLA…EREILGINSR (230 aa). UDP-N-acetyl-alpha-D-glucosamine is bound by residues 9-12, Lys-23, Gln-73, and 78-79; these read LAAG and GT. Asp-103 is a Mg(2+) binding site. 4 residues coordinate UDP-N-acetyl-alpha-D-glucosamine: Gly-140, Glu-155, Asn-170, and Asn-228. Asn-228 is a binding site for Mg(2+). Residues 231-251 form a linker region; the sequence is VQLAEAEAVLQDRLRRKWMDA. The N-acetyltransferase stretch occupies residues 252–458; sequence GVTLIDPPSV…FLGRKHKGSQ (207 aa). Residues Arg-333 and Lys-351 each contribute to the UDP-N-acetyl-alpha-D-glucosamine site. The Proton acceptor role is filled by His-363. UDP-N-acetyl-alpha-D-glucosamine-binding residues include Tyr-366 and Asn-377. Residues Ala-380, 386–387, Ser-405, Ala-423, and Arg-440 contribute to the acetyl-CoA site; that span reads NY.

It in the N-terminal section; belongs to the N-acetylglucosamine-1-phosphate uridyltransferase family. The protein in the C-terminal section; belongs to the transferase hexapeptide repeat family. As to quaternary structure, homotrimer. Requires Mg(2+) as cofactor.

It is found in the cytoplasm. It carries out the reaction alpha-D-glucosamine 1-phosphate + acetyl-CoA = N-acetyl-alpha-D-glucosamine 1-phosphate + CoA + H(+). The enzyme catalyses N-acetyl-alpha-D-glucosamine 1-phosphate + UTP + H(+) = UDP-N-acetyl-alpha-D-glucosamine + diphosphate. It functions in the pathway nucleotide-sugar biosynthesis; UDP-N-acetyl-alpha-D-glucosamine biosynthesis; N-acetyl-alpha-D-glucosamine 1-phosphate from alpha-D-glucosamine 6-phosphate (route II): step 2/2. The protein operates within nucleotide-sugar biosynthesis; UDP-N-acetyl-alpha-D-glucosamine biosynthesis; UDP-N-acetyl-alpha-D-glucosamine from N-acetyl-alpha-D-glucosamine 1-phosphate: step 1/1. It participates in bacterial outer membrane biogenesis; LPS lipid A biosynthesis. In terms of biological role, catalyzes the last two sequential reactions in the de novo biosynthetic pathway for UDP-N-acetylglucosamine (UDP-GlcNAc). The C-terminal domain catalyzes the transfer of acetyl group from acetyl coenzyme A to glucosamine-1-phosphate (GlcN-1-P) to produce N-acetylglucosamine-1-phosphate (GlcNAc-1-P), which is converted into UDP-GlcNAc by the transfer of uridine 5-monophosphate (from uridine 5-triphosphate), a reaction catalyzed by the N-terminal domain. The protein is Bifunctional protein GlmU of Heliobacterium modesticaldum (strain ATCC 51547 / Ice1).